We begin with the raw amino-acid sequence, 312 residues long: MIEFEKPIITKIDENKDYGRFVIEPLERGYGTTLGNSLRRVLLSSLPGAAVTSIKIDGVLHEFDTIPGVREDVMQIILNVKGLAVKSYVEDEKIIELEVEGPAEVTAGDILTDSDIELVNPDHYLFTIAEGHSLRATMTVAKKRGYVPAEGNKKDDAPVGTLAVDSIYTPVKKVNYQVEPARVGSNDGFDKLTIEIMTNGTIIPEDALGLSARVLIEHLNLFTDLTEVAKATEVMKETEKVNDEKVLDRTIEELDLSVRSYNCLKRAGINTVFDLTEKSEPEMMKVRNLGRKSLEEVKVKLADLGLGLKNDK.

Residues 1–226 are alpha N-terminal domain (alpha-NTD); the sequence is MIEFEKPIIT…EHLNLFTDLT (226 aa). The interval 243–312 is alpha C-terminal domain (alpha-CTD); it reads DEKVLDRTIE…DLGLGLKNDK (70 aa).

The protein belongs to the RNA polymerase alpha chain family. As to quaternary structure, homodimer. The RNAP catalytic core consists of 2 alpha, 1 beta, 1 beta' and 1 omega subunit. When a sigma factor is associated with the core the holoenzyme is formed, which can initiate transcription.

It carries out the reaction RNA(n) + a ribonucleoside 5'-triphosphate = RNA(n+1) + diphosphate. Functionally, DNA-dependent RNA polymerase catalyzes the transcription of DNA into RNA using the four ribonucleoside triphosphates as substrates. The sequence is that of DNA-directed RNA polymerase subunit alpha from Streptococcus pyogenes serotype M1.